The following is a 513-amino-acid chain: MEEYEAQLLVVEQALENAADDAQRQELLALKNNLQELLALTRDTGDEAPTDELPQQGNDLDDELQRLKSELSDLEAAGSSQTALDEERQLADLRTKYTAMVGEKCSAPHEHSWGTCYHNALICGVDDEVVINSEGVLDARLRVLFTNPTHREMLPCSYYLEGECRFDEAKCRFSHGALVTGSSIRKYNPPDFHKLSRSRPVFALLPDRLWHRGRVLCVNFVEQVCRVRLDGQDHKERERDFKFEELYPLTTDQDEDDELSSEESTSSMRDASSDEAESDMDDLEEARRARMVELSLFTYKPTDRLGAWEEFTRGIGSKLMEKMGYIHGTGLGSEGRGIVTPVSAQILPQGRSLDACMELREAANGDKDYFSVERKLKRAQRRQRKADEKAYVRESQRVDVFTFLNDRVLGPGESTQQSEQVAKKAKNNELQQHSTKTLNVETVRIADEIRRKQRDMAKVKQSLERNSGDAQLQKRLQVQMQSHKQELATLQAQERSLSKEQQTRKSKNKMFEF.

The segment at 155–178 (PCSYYLEGECRFDEAKCRFSHGAL) adopts a C3H1-type zinc-finger fold. Composition is skewed to acidic residues over residues 252 to 261 (DQDEDDELSS) and 273 to 283 (SDEAESDMDDL). A disordered region spans residues 252–283 (DQDEDDELSSEESTSSMRDASSDEAESDMDDL). The G-patch domain maps to 312–358 (TRGIGSKLMEKMGYIHGTGLGSEGRGIVTPVSAQILPQGRSLDACME). Disordered regions lie at residues 411–430 (PGES…NNEL) and 477–513 (QVQM…MFEF). Positions 477-495 (QVQMQSHKQELATLQAQER) are enriched in polar residues. The segment covering 496–513 (SLSKEQQTRKSKNKMFEF) has biased composition (basic and acidic residues).

It localises to the nucleus. Transcription repressor. This chain is Zinc finger CCCH-type with G patch domain-containing protein, found in Drosophila sechellia (Fruit fly).